A 274-amino-acid polypeptide reads, in one-letter code: Diaminopimelate epimerase (274 aa).

Asn-11, Gln-44, and Asn-64 together coordinate substrate. Cys-73 (proton donor) is an active-site residue. Substrate contacts are provided by residues 74–75, Asn-157, Asn-190, and 208–209; these read GN and ER. The Proton acceptor role is filled by Cys-217. 218 to 219 is a binding site for substrate; it reads GS.

The protein belongs to the diaminopimelate epimerase family. Homodimer.

It localises to the cytoplasm. It carries out the reaction (2S,6S)-2,6-diaminopimelate = meso-2,6-diaminopimelate. It functions in the pathway amino-acid biosynthesis; L-lysine biosynthesis via DAP pathway; DL-2,6-diaminopimelate from LL-2,6-diaminopimelate: step 1/1. Functionally, catalyzes the stereoinversion of LL-2,6-diaminopimelate (L,L-DAP) to meso-diaminopimelate (meso-DAP), a precursor of L-lysine and an essential component of the bacterial peptidoglycan. The protein is Diaminopimelate epimerase of Sodalis glossinidius (strain morsitans).